A 388-amino-acid chain; its full sequence is Probable peptidoglycan glycosyltransferase FtsW (388 aa).

Residues 1 to 19 (MMSPSTSAPHNQPIQPELD) lie on the Cytoplasmic side of the membrane. The helical transmembrane segment at 20–40 (VLLVSTVLLLLGLGLVMVYSA) threads the bilayer. At 41–55 (SIAIAEAKFGEGSSY) the chain is on the periplasmic side. The helical transmembrane segment at 56 to 76 (YFLARQASYILAGIAVGIGCF) threads the bilayer. Topologically, residues 77–89 (RIPLRWWQAYSHY) are cytoplasmic. Residues 90–110 (LLGLGILLLLVVLIPGISHEI) form a helical membrane-spanning segment. Residues 111–116 (NGSRRW) lie on the Periplasmic side of the membrane. The chain crosses the membrane as a helical span at residues 117 to 137 (IPLGITSFQPSELMKLIILIF). The Cytoplasmic portion of the chain corresponds to 138–151 (TADYVVRKAAFKDH). A helical membrane pass occupies residues 152–172 (FFKGFLPILALLTIVSLLLLM). Residues 173-175 (EPD) are Periplasmic-facing. 2 helical membrane passes run 176–196 (LGATVVIAAIVLSIMFMNGMS) and 197–217 (LKMFFGLICLVPVLLALLIII). The Periplasmic portion of the chain corresponds to 218-284 (EPYRMDRINA…DFMFAVLAEE (67 aa)). The helical transmembrane segment at 285–305 (LGFAGVVTVISLFFFLLVRIF) threads the bilayer. The Cytoplasmic segment spans residues 306–324 (KVGRTAARLGDQFGSLVAQ). Residues 325–345 (GIGVWLGLQAFINMGVNMGLL) traverse the membrane as a helical segment. Residues 346 to 351 (PTKGLT) are Periplasmic-facing. A helical transmembrane segment spans residues 352–372 (LPFMSYGGSSIVINSIAIAIL). At 373–388 (LRIDWENRLKRRGLNA) the chain is on the cytoplasmic side.

This sequence belongs to the SEDS family. FtsW subfamily.

It localises to the cell inner membrane. The catalysed reaction is [GlcNAc-(1-&gt;4)-Mur2Ac(oyl-L-Ala-gamma-D-Glu-L-Lys-D-Ala-D-Ala)](n)-di-trans,octa-cis-undecaprenyl diphosphate + beta-D-GlcNAc-(1-&gt;4)-Mur2Ac(oyl-L-Ala-gamma-D-Glu-L-Lys-D-Ala-D-Ala)-di-trans,octa-cis-undecaprenyl diphosphate = [GlcNAc-(1-&gt;4)-Mur2Ac(oyl-L-Ala-gamma-D-Glu-L-Lys-D-Ala-D-Ala)](n+1)-di-trans,octa-cis-undecaprenyl diphosphate + di-trans,octa-cis-undecaprenyl diphosphate + H(+). Its pathway is cell wall biogenesis; peptidoglycan biosynthesis. Its function is as follows. Peptidoglycan polymerase that is essential for cell division. The sequence is that of Probable peptidoglycan glycosyltransferase FtsW from Nitrosomonas europaea (strain ATCC 19718 / CIP 103999 / KCTC 2705 / NBRC 14298).